Consider the following 315-residue polypeptide: Tyrosine recombinase XerC (315 aa).

In terms of domain architecture, Core-binding (CB) spans 14–105 (PDLLNERQSW…GLRSLLHHLQ (92 aa)). In terms of domain architecture, Tyr recombinase spans 126-309 (SLPKPLTDRQ…DTARLLEIYD (184 aa)). Active-site residues include Arg169, Lys193, His261, Arg264, and His287. The O-(3'-phospho-DNA)-tyrosine intermediate role is filled by Tyr296.

Belongs to the 'phage' integrase family. XerC subfamily. Forms a cyclic heterotetrameric complex composed of two molecules of XerC and two molecules of XerD.

It localises to the cytoplasm. In terms of biological role, site-specific tyrosine recombinase, which acts by catalyzing the cutting and rejoining of the recombining DNA molecules. The XerC-XerD complex is essential to convert dimers of the bacterial chromosome into monomers to permit their segregation at cell division. It also contributes to the segregational stability of plasmids. The protein is Tyrosine recombinase XerC of Agrobacterium fabrum (strain C58 / ATCC 33970) (Agrobacterium tumefaciens (strain C58)).